The following is a 552-amino-acid chain: MERFLRKYNISGDYANATRTFLAISPQWTCSHLKRNCLFNGMCVKQHFERAMIAATDAEEPAKAYKLVELAKEAMYDRETVWLQCFKSFSQPYEEDVEGKMKRCGAQLLEDYRKSGMMNEAVKQSALVNSERIRLDDSLSAMPYIYVPINDGQIVNPTFISRYRQIAYYFYNPDAADDWIDPNLFGIRGQHNQIKREVERQINTCPYTGYRGRVFQVMFLPIQLINFLRMDDFAKHFNRYASMAIQQYLRVGYAEEIRYVQQLFGRVPTGEFPLHQMMLMRRDLPTRDRSIVEARVRRSGDENWQSWLLPMIIIREGLDHQDRWEWFIDYMDRKHTCQLCYLKHSKQIPACSVIDVRASELTGCSPFKMVKIEEHVGNDSVFKTKLVRDEQIGRIGDHYYTTNCYTGAEALITTAIHIHRWIRGSGIWNDEGWQEGIFMLGRVLLRWELTKAQRSALLRLFCFVCYGYAPRADGTIPDWNNLGNFLDIILKGPELSEDEDERAYATMFEMVRCIITLCYAEKVHFAGFAAPACEGGEVINLAARMSQMWMEY.

This sequence belongs to the orbivirus non-structural protein NS1 family.

The protein is Non-structural protein NS1 (Segment-5) of Antilocapra americana (Pronghorn).